The primary structure comprises 370 residues: Peptidyl-prolyl cis-trans isomerase D (370 aa).

The PPIase cyclophilin-type domain occupies 11 to 176; the sequence is FFDISADGKP…EDWIISDCGE (166 aa). TPR repeat units lie at residues 218–251, 269–302, and 307–340; these read VTTLKDIGTKQLKDGNVAAAYEKYNKASGFLNDY, LSCYLNAALVALKLKDGKKTINAASNALEVEAID, and TKALYRKGMGYLLAKDEESAQKSLEEALQLSPED.

It belongs to the cyclophilin-type PPIase family. PPIase D subfamily.

It localises to the cytoplasm. It carries out the reaction [protein]-peptidylproline (omega=180) = [protein]-peptidylproline (omega=0). In terms of biological role, PPIases accelerate the folding of proteins. It catalyzes the cis-trans isomerization of proline imidic peptide bonds in oligopeptides. The protein is Peptidyl-prolyl cis-trans isomerase D (CPR6) of Debaryomyces hansenii (strain ATCC 36239 / CBS 767 / BCRC 21394 / JCM 1990 / NBRC 0083 / IGC 2968) (Yeast).